Here is a 520-residue protein sequence, read N- to C-terminus: Peptide chain release factor 3 (520 aa).

One can recognise a tr-type G domain in the interval glutamate 8 to threonine 277. Residues serine 17–threonine 24, aspartate 85–histidine 89, and asparagine 139–aspartate 142 contribute to the GTP site.

Belongs to the TRAFAC class translation factor GTPase superfamily. Classic translation factor GTPase family. PrfC subfamily.

It is found in the cytoplasm. In terms of biological role, increases the formation of ribosomal termination complexes and stimulates activities of RF-1 and RF-2. It binds guanine nucleotides and has strong preference for UGA stop codons. It may interact directly with the ribosome. The stimulation of RF-1 and RF-2 is significantly reduced by GTP and GDP, but not by GMP. The protein is Peptide chain release factor 3 of Staphylococcus epidermidis (strain ATCC 35984 / DSM 28319 / BCRC 17069 / CCUG 31568 / BM 3577 / RP62A).